A 47-amino-acid polypeptide reads, in one-letter code: METATSVAISISCLLISFTGYALYTAFGNPASGLKDPFEGHEDWSDQ.

Residues Val7 to Asn29 traverse the membrane as a helical segment.

It belongs to the PsbN family.

The protein resides in the plastid membrane. Its function is as follows. May play a role in photosystem I and II biogenesis. This is Protein PsbN from Aneura mirabilis (Parasitic liverwort).